The sequence spans 98 residues: MPIIYMNIMLAFTISLLGMLIYRSHLMSSLLCLEGMMLSLFIMNTLMALNMHSPLTNIVPITLLVFAACEAAVGLALLVSISSTYGLDHIQNLSLLQC.

The next 3 helical transmembrane spans lie at 1–21, 29–49, and 58–78; these read MPIIYMNIMLAFTISLLGMLI, SLLCLEGMMLSLFIMNTLMAL, and IVPITLLVFAACEAAVGLALL.

Belongs to the complex I subunit 4L family. Core subunit of respiratory chain NADH dehydrogenase (Complex I) which is composed of 45 different subunits.

The protein localises to the mitochondrion inner membrane. It carries out the reaction a ubiquinone + NADH + 5 H(+)(in) = a ubiquinol + NAD(+) + 4 H(+)(out). Core subunit of the mitochondrial membrane respiratory chain NADH dehydrogenase (Complex I) which catalyzes electron transfer from NADH through the respiratory chain, using ubiquinone as an electron acceptor. Part of the enzyme membrane arm which is embedded in the lipid bilayer and involved in proton translocation. In Colobus guereza (Mantled guereza), this protein is NADH-ubiquinone oxidoreductase chain 4L (MT-ND4L).